Reading from the N-terminus, the 221-residue chain is MPDSPFGDWDGTPAGARLLQQELAGRVVLRDDFPDLGLIAGVDVGFEEGGGITRAAAVLLDANTLGVLAESLVRIPTSMPYIPGLLSFRELPAVLRALAELPRVPDLVFCDGQGIAHPRRLGIAAHLGVVSGLPTIGVAKKILVGTHAELGSHRGDQVPLMYRGEVLGAVLRSKDRVRPLIVSPGHRVSLASAPRLVMACVTRYRLPEPTRLADRLASRRA.

Mg(2+) is bound by residues D43 and D111.

It belongs to the endonuclease V family. Mg(2+) is required as a cofactor.

Its subcellular location is the cytoplasm. The enzyme catalyses Endonucleolytic cleavage at apurinic or apyrimidinic sites to products with a 5'-phosphate.. Its function is as follows. DNA repair enzyme involved in the repair of deaminated bases. Selectively cleaves double-stranded DNA at the second phosphodiester bond 3' to a deoxyinosine leaving behind the intact lesion on the nicked DNA. This is Endonuclease V from Azotobacter vinelandii (strain DJ / ATCC BAA-1303).